Consider the following 380-residue polypeptide: Cytochrome b (380 aa).

4 helical membrane-spanning segments follow: residues 33–53 (FGSL…FLAM), 77–98 (WLLR…YLHI), 113–133 (WNIG…GYVL), and 178–198 (FFTF…LHLL). 2 residues coordinate heme b: His83 and His97. Residues His182 and His196 each coordinate heme b. Position 201 (His201) interacts with a ubiquinone. The next 4 membrane-spanning stretches (helical) occupy residues 226 to 246 (YKDL…ALLN), 288 to 308 (LGGV…PTLH), 320 to 340 (SSQT…WIGG), and 347 to 367 (FIII…FFIP).

The protein belongs to the cytochrome b family. The cytochrome bc1 complex contains 3 respiratory subunits (MT-CYB, CYC1 and UQCRFS1), 2 core proteins (UQCRC1 and UQCRC2) and probably 6 low-molecular weight proteins. Heme b is required as a cofactor.

The protein resides in the mitochondrion inner membrane. Component of the ubiquinol-cytochrome c reductase complex (complex III or cytochrome b-c1 complex) that is part of the mitochondrial respiratory chain. The b-c1 complex mediates electron transfer from ubiquinol to cytochrome c. Contributes to the generation of a proton gradient across the mitochondrial membrane that is then used for ATP synthesis. The polypeptide is Cytochrome b (mt-cyb) (Lepisosteus oculatus (Spotted gar)).